The following is a 256-amino-acid chain: 5'-nucleotidase SurE (256 aa).

Residues Asp8, Asp9, Ser39, and Asn91 each contribute to the a divalent metal cation site.

The protein belongs to the SurE nucleotidase family. Requires a divalent metal cation as cofactor.

The protein localises to the cytoplasm. The enzyme catalyses a ribonucleoside 5'-phosphate + H2O = a ribonucleoside + phosphate. Functionally, nucleotidase that shows phosphatase activity on nucleoside 5'-monophosphates. The protein is 5'-nucleotidase SurE of Marinobacter nauticus (strain ATCC 700491 / DSM 11845 / VT8) (Marinobacter aquaeolei).